A 137-amino-acid chain; its full sequence is Basic phospholipase A2 homolog APL-K49 (137 aa).

An N-terminal signal peptide occupies residues 1–16; the sequence is MRTLWIVALLLVGVEG. Disulfide bonds link Cys42–Cys131, Cys44–Cys60, Cys59–Cys111, Cys65–Cys137, Cys66–Cys104, Cys73–Cys97, and Cys91–Cys102. The tract at residues 121–133 is important for membrane-damaging activities in eukaryotes and bacteria; heparin-binding; the sequence is KKYKAYFKLKCKK.

Belongs to the phospholipase A2 family. Group II subfamily. K49 sub-subfamily. In terms of assembly, monomer. In terms of tissue distribution, expressed by the venom gland.

The protein resides in the secreted. Functionally, snake venom phospholipase A2 (PLA2) that lacks enzymatic activity. Does not show antibacterial activity. Is myotoxic and displays edema-inducing activities. A model of myotoxic mechanism has been proposed: an apo Lys49-PLA2 is activated by the entrance of a hydrophobic molecule (e.g. fatty acid) at the hydrophobic channel of the protein leading to a reorientation of a monomer. This reorientation causes a transition between 'inactive' to 'active' states, causing alignment of C-terminal and membrane-docking sites (MDoS) side-by-side and putting the membrane-disruption sites (MDiS) in the same plane, exposed to solvent and in a symmetric position for both monomers. The MDoS region stabilizes the toxin on membrane by the interaction of charged residues with phospholipid head groups. Subsequently, the MDiS region destabilizes the membrane with penetration of hydrophobic residues. This insertion causes a disorganization of the membrane, allowing an uncontrolled influx of ions (i.e. calcium and sodium), and eventually triggering irreversible intracellular alterations and cell death. This is Basic phospholipase A2 homolog APL-K49 from Agkistrodon piscivorus leucostoma (Western cottonmouth).